A 393-amino-acid chain; its full sequence is S-adenosylmethionine synthase (393 aa).

Position 9 (Glu9) interacts with Mg(2+). Position 15 (His15) interacts with ATP. Asp17 serves as a coordination point for Mg(2+). K(+) is bound at residue Glu43. 2 residues coordinate L-methionine: Glu56 and Gln99. ATP-binding positions include 167 to 169 (DGK), 235 to 238 (SGRF), Asp246, 252 to 253 (RK), Ala269, Lys273, and Lys277. Asp246 lines the L-methionine pocket. Residue Lys277 participates in L-methionine binding.

The protein belongs to the AdoMet synthase family. As to quaternary structure, homotetramer; dimer of dimers. Mn(2+) is required as a cofactor. Requires Mg(2+) as cofactor. Co(2+) serves as cofactor. The cofactor is K(+).

The protein localises to the cytoplasm. The catalysed reaction is L-methionine + ATP + H2O = S-adenosyl-L-methionine + phosphate + diphosphate. It functions in the pathway amino-acid biosynthesis; S-adenosyl-L-methionine biosynthesis; S-adenosyl-L-methionine from L-methionine: step 1/1. Increased activity in the presence of 25 percent acetonitrile, methanol or dimethylformamide. In terms of biological role, catalyzes the formation of S-adenosylmethionine from methionine and ATP. The sequence is that of S-adenosylmethionine synthase from Acacia koa (Koa tree).